Here is a 373-residue protein sequence, read N- to C-terminus: 3 beta-hydroxysteroid dehydrogenase/Delta 5--&gt;4-isomerase (373 aa).

Tyr-155 (proton acceptor) is an active-site residue. Lys-159 is an NAD(+) binding site. Residues 288–308 (ISLQYWLAFLLEIVSFLLSPI) traverse the membrane as a helical segment.

It belongs to the 3-beta-HSD family.

The protein localises to the endoplasmic reticulum membrane. It is found in the mitochondrion membrane. The catalysed reaction is a 3beta-hydroxy-Delta(5)-steroid + NAD(+) = a 3-oxo-Delta(5)-steroid + NADH + H(+). It carries out the reaction a 3-oxo-Delta(5)-steroid = a 3-oxo-Delta(4)-steroid. It participates in lipid metabolism; steroid biosynthesis. Its function is as follows. 3-beta-HSD is a bifunctional enzyme, that catalyzes the oxidative conversion of Delta(5)-ene-3-beta-hydroxy steroid, and the oxidative conversion of ketosteroids. The 3-beta-HSD enzymatic system plays a crucial role in the biosynthesis of all classes of hormonal steroids. The polypeptide is 3 beta-hydroxysteroid dehydrogenase/Delta 5--&gt;4-isomerase (HSD3B) (Bos taurus (Bovine)).